The following is a 1238-amino-acid chain: uncharacterized protein (1238 aa).

6 disordered regions span residues 1-38 (MSSKRRNKNNKNNNKNNNKNNDNNNNIEQQDDIEDISS), 122-156 (SSTPISQLSPFKTPSPPSSSSSSSQSPLRKPRPSF), 229-439 (PKNN…KNKE), 660-1016 (KNKL…TGAA), 1051-1083 (EEEDDEEEKEQQNNNNNINSNSKNNNVNNKLNS), and 1098-1191 (KKSG…NASR). 3 stretches are compositionally biased toward low complexity: residues 10–26 (NKNNNKNNNKNNDNNNN), 129–149 (LSPFKTPSPPSSSSSSSQSPL), and 234–276 (QIDS…TQSQ). A compositionally biased stretch (polar residues) spans 317 to 343 (ELQNQTQINKSKQDLTNISQKINITTS). Residues 344–361 (QHDKDDLGEYRMSEKGGG) are compositionally biased toward basic and acidic residues. Positions 362 to 372 (DDGDDDDDYDN) are enriched in acidic residues. The span at 383 to 394 (TNKKQQQQHHHK) shows a compositional bias: basic residues. Residues 395–416 (GKEESQSEYYEKEKEKEKEDIA) are compositionally biased toward basic and acidic residues. 3 stretches are compositionally biased toward low complexity: residues 417–435 (TTRATTTTKSTDNSNNNIN), 678–691 (QQQQQQKQQQQQQE), and 712–792 (QPSQ…QEKQ). A compositionally biased stretch (basic and acidic residues) spans 793–805 (QSQEKHQSQEKHQ). Low complexity-rich tracts occupy residues 806–859 (SQQS…SQQK) and 882–906 (SQSQSDLSQQFLSQSQSQSQSQSQR). Acidic residues predominate over residues 916–927 (ENQDSENLDDTV). The span at 929-944 (MNYNQIPSTLDHSTLQ) shows a compositional bias: polar residues. Residues 966 to 975 (EIERRRRELA) are compositionally biased toward basic and acidic residues. Residues 976–990 (GEDSDEEFEILDEDQ) are compositionally biased toward acidic residues. Composition is skewed to low complexity over residues 1062 to 1083 (QNNNNNINSNSKNNNVNNKLNS) and 1108 to 1121 (SSSSTNFYSSNKKN). Residues 1123–1133 (PQPTKSVNKPR) are compositionally biased toward polar residues. Low complexity predominate over residues 1142-1181 (SQNRQKQSEQQQQQPQQQPQLPQQQQQQQQQQQLRQQQNE). Polar residues predominate over residues 1182 to 1191 (NTISSLNASR).

This is an uncharacterized protein from Dictyostelium discoideum (Social amoeba).